A 226-amino-acid chain; its full sequence is MFTLLVLLSQLPTVTLGFPHCARGPKASKHAGEEVFTSKEEANFFIHRRLLYNRFDLELFTPGNLERECNEELCNYEEAREIFVDEDKTIAFWQEYSAKGPTTKSDGNREKIDVMGLLTGLIAAGVFLVIFGLLGYYLCITKCNRLQHPCSSAVYERGRHTPSIIFRRPEEAALSPLPPSVEDAGLPSYEQAVALTRKHSVSPPPPYPGHTKGFRVFKKSMSLPSH.

Residues 1-17 form the signal peptide; the sequence is MFTLLVLLSQLPTVTLG. Positions 18-49 are excised as a propeptide; the sequence is FPHCARGPKASKHAGEEVFTSKEEANFFIHRR. The Extracellular portion of the chain corresponds to 50-113; the sequence is LLYNRFDLEL…KSDGNREKID (64 aa). The 47-residue stretch at 52–98 folds into the Gla domain; it reads YNRFDLELFTPGNLERECNEELCNYEEAREIFVDEDKTIAFWQEYSA. The cysteines at positions 69 and 74 are disulfide-linked. E72 is subject to 4-carboxyglutamate. Residues 114–134 form a helical membrane-spanning segment; sequence VMGLLTGLIAAGVFLVIFGLL. Residues 135-226 are Cytoplasmic-facing; sequence GYYLCITKCN…FKKSMSLPSH (92 aa). S163 bears the Phosphoserine mark. An LPXY motif; mediates binding to WW domain-containing proteins motif is present at residues 186-189; sequence LPSY. A PPXY motif; mediates binding to WW domain-containing proteins motif is present at residues 204-207; it reads PPPY.

It belongs to the commissureless family. Interacts (via cytoplasmic domain) with WW domain-containing proteins MAGI1, MAGI3, NEDD4, NEDD4L, WWTR1/TAZ and YAP1. In terms of processing, gamma-carboxyglutamate residues are formed by vitamin K dependent carboxylation. These residues are essential for the binding of calcium. Widely expressed with highest levels in kidney.

It localises to the endoplasmic reticulum-Golgi intermediate compartment membrane. The protein localises to the cell membrane. May control axon guidance across the CNS. Prevents the delivery of ROBO1 at the cell surface and down-regulates its expression. The polypeptide is Transmembrane gamma-carboxyglutamic acid protein 4 (Homo sapiens (Human)).